Reading from the N-terminus, the 295-residue chain is Bifunctional protein FolD (295 aa).

Residues 165–167, Ser-192, and Ile-233 contribute to the NADP(+) site; that span reads GRG.

It belongs to the tetrahydrofolate dehydrogenase/cyclohydrolase family. As to quaternary structure, homodimer.

It carries out the reaction (6R)-5,10-methylene-5,6,7,8-tetrahydrofolate + NADP(+) = (6R)-5,10-methenyltetrahydrofolate + NADPH. The enzyme catalyses (6R)-5,10-methenyltetrahydrofolate + H2O = (6R)-10-formyltetrahydrofolate + H(+). Its pathway is one-carbon metabolism; tetrahydrofolate interconversion. Its function is as follows. Catalyzes the oxidation of 5,10-methylenetetrahydrofolate to 5,10-methenyltetrahydrofolate and then the hydrolysis of 5,10-methenyltetrahydrofolate to 10-formyltetrahydrofolate. The sequence is that of Bifunctional protein FolD from Tropheryma whipplei (strain TW08/27) (Whipple's bacillus).